Consider the following 271-residue polypeptide: DNA-binding protein HEXBP (271 aa).

Basic and acidic residues-rich tracts occupy residues 1 to 12 (MSETEDVKRPRT) and 21 to 42 (CGKEGHYARECPEADSKGDERS). A disordered region spans residues 1-42 (MSETEDVKRPRTESSTSCRNCGKEGHYARECPEADSKGDERS). CCHC-type zinc fingers lie at residues 16 to 33 (TSCRNCGKEGHYARECPE), 43 to 60 (TTCFRCGEEGHMSRECPN), 70 to 87 (MTCFRCGEAGHMSRDCPN), and 97 to 114 (FECYKCGQEGHLSRDCPS). The segment at 107-136 (HLSRDCPSSQGGSRGGYGQKRGRSGAQGGY) is disordered. The span at 118-136 (GSRGGYGQKRGRSGAQGGY) shows a compositional bias: gly residues. CCHC-type zinc fingers lie at residues 140 to 157 (RTCYKCGDAGHISRDCPN), 168 to 185 (RTCYKCGDAGHISRDCPN), 196 to 213 (RKCYKCGESGHMSRECPS), 222 to 239 (RACYKCGKPGHISRECPE), and 253 to 270 (RTCYKCGEAGHISRDCPS).

It is found in the nucleus. In terms of biological role, binds to single-stranded DNA located in the 5' hexanucleotide repeat region of the L.major leishmanolysin (GP63) gene. This Leishmania major protein is DNA-binding protein HEXBP (HEXBP).